Consider the following 438-residue polypeptide: Glutamate--tRNA ligase 2 (438 aa).

The 'HIGH' region signature appears at 6–16 (PSPTGDMHTGN). The 'KMSKS' region motif lies at 231 to 235 (KMSKR). Lys-234 contacts ATP.

The protein belongs to the class-I aminoacyl-tRNA synthetase family. Glutamate--tRNA ligase type 1 subfamily. As to quaternary structure, monomer.

Its subcellular location is the cytoplasm. The catalysed reaction is tRNA(Glu) + L-glutamate + ATP = L-glutamyl-tRNA(Glu) + AMP + diphosphate. Catalyzes the attachment of glutamate to tRNA(Glu) in a two-step reaction: glutamate is first activated by ATP to form Glu-AMP and then transferred to the acceptor end of tRNA(Glu). The sequence is that of Glutamate--tRNA ligase 2 from Wolinella succinogenes (strain ATCC 29543 / DSM 1740 / CCUG 13145 / JCM 31913 / LMG 7466 / NCTC 11488 / FDC 602W) (Vibrio succinogenes).